A 173-amino-acid chain; its full sequence is Crossover junction endodeoxyribonuclease RuvC (173 aa).

Residues D8, E67, and D139 contribute to the active site. Mg(2+)-binding residues include D8, E67, and D139.

The protein belongs to the RuvC family. In terms of assembly, homodimer which binds Holliday junction (HJ) DNA. The HJ becomes 2-fold symmetrical on binding to RuvC with unstacked arms; it has a different conformation from HJ DNA in complex with RuvA. In the full resolvosome a probable DNA-RuvA(4)-RuvB(12)-RuvC(2) complex forms which resolves the HJ. Mg(2+) serves as cofactor.

Its subcellular location is the cytoplasm. It catalyses the reaction Endonucleolytic cleavage at a junction such as a reciprocal single-stranded crossover between two homologous DNA duplexes (Holliday junction).. The RuvA-RuvB-RuvC complex processes Holliday junction (HJ) DNA during genetic recombination and DNA repair. Endonuclease that resolves HJ intermediates. Cleaves cruciform DNA by making single-stranded nicks across the HJ at symmetrical positions within the homologous arms, yielding a 5'-phosphate and a 3'-hydroxyl group; requires a central core of homology in the junction. The consensus cleavage sequence is 5'-(A/T)TT(C/G)-3'. Cleavage occurs on the 3'-side of the TT dinucleotide at the point of strand exchange. HJ branch migration catalyzed by RuvA-RuvB allows RuvC to scan DNA until it finds its consensus sequence, where it cleaves and resolves the cruciform DNA. The protein is Crossover junction endodeoxyribonuclease RuvC of Klebsiella pneumoniae subsp. pneumoniae (strain ATCC 700721 / MGH 78578).